The primary structure comprises 78 residues: Sec-independent protein translocase protein TatA (78 aa).

A helical membrane pass occupies residues 1–21 (MGSLSIWHWIVVVAVILLLFG). A compositionally biased stretch (basic and acidic residues) spans 43–55 (MKDDEKTAEKPEP). Positions 43-78 (MKDDEKTAEKPEPVKTINHNADGSGAARSDTGSKVI) are disordered.

The protein belongs to the TatA/E family. The Tat system comprises two distinct complexes: a TatABC complex, containing multiple copies of TatA, TatB and TatC subunits, and a separate TatA complex, containing only TatA subunits. Substrates initially bind to the TatABC complex, which probably triggers association of the separate TatA complex to form the active translocon.

It is found in the cell inner membrane. Its function is as follows. Part of the twin-arginine translocation (Tat) system that transports large folded proteins containing a characteristic twin-arginine motif in their signal peptide across membranes. TatA could form the protein-conducting channel of the Tat system. The chain is Sec-independent protein translocase protein TatA from Nitrobacter winogradskyi (strain ATCC 25391 / DSM 10237 / CIP 104748 / NCIMB 11846 / Nb-255).